A 148-amino-acid chain; its full sequence is Protein GLUTAMINE DUMPER 3 (148 aa).

A disordered region spans residues 1–24 (MEGRQYYPPRENVEGNRTTMGGGP). Topologically, residues 1–34 (MEGRQYYPPRENVEGNRTTMGGGPHSPWHSPVPY) are extracellular. Residues 35-55 (LFGGLAAMLGLIAFALLILAC) form a helical membrane-spanning segment. The Cytoplasmic segment spans residues 56 to 148 (SYWRLSGYLD…RSSESNGETH (93 aa)). Residues 99–103 (VIMAG) carry the VIMAG motif. Residues 120-132 (CDDDDDEDDDVEG) show a composition bias toward acidic residues. The disordered stretch occupies residues 120-148 (CDDDDDEDDDVEGSDQVVPRSSESNGETH). A compositionally biased stretch (polar residues) spans 138-148 (PRSSESNGETH).

The protein belongs to the GLUTAMINE DUMPER 1 (TC 9.B.60) family. In terms of tissue distribution, expressed in the vascular tissues. Also detected in anthers.

The protein localises to the membrane. Its function is as follows. Probable subunit of an amino acid transporter involved in the regulation of the amino acid metabolism. Stimulates amino acid export by activating nonselective amino acid facilitators. Acts upstream genes involved in the salicylic acid (SA) pathway and in the geminivirus-host interaction. The protein is Protein GLUTAMINE DUMPER 3 (GDU3) of Arabidopsis thaliana (Mouse-ear cress).